Here is a 253-residue protein sequence, read N- to C-terminus: Bridging integrator 3 (253 aa).

The 224-residue stretch at 9 to 232 (GQPKKQIVSK…LDQPGHSDEQ (224 aa)) folds into the BAR domain. Coiled coils occupy residues 16-57 (VSKT…AMSK) and 120-151 (SLNM…KEKT). Residues 222 to 241 (QLDQPGHSDEQRERENETKL) form a disordered region. The span at 227-241 (GHSDEQRERENETKL) shows a compositional bias: basic and acidic residues.

The protein resides in the cytoplasm. Its subcellular location is the cytoskeleton. Its function is as follows. Involved in cytokinesis and septation where it has a role in the localization of F-actin. The sequence is that of Bridging integrator 3 (Bin3) from Mus musculus (Mouse).